Consider the following 444-residue polypeptide: MTEQPPQNHSVDLNQNEDNNENDYRSSSATDAERPCEPKIEESTAKPPTGPPAPPPPPNGGLVAWLHVIGGFMLFFNTWGIMNAFGVFQTYYESGALFERSSSDISWIGSIQATMLLLVGFFTGSIYDRGYLRALLVVGSFCIVFGHMMLSLCKTYGQVLLAQGFCVGIGAGCLFVPCVSVLPTYFSSRLGTALGLAVSGSSMGGVIYPIVLNELIGPLGFGWSVRVIGFIALGTLLVPIAVMKQRVKPPRARALIDWSAFSDIPYMAFTLASLLAFMGLFALLFYISYFGAAKPITDTRMAFYIVPILNAASCFGRTIPNAMADKIGPFNLIAPCCLAVGVLILCLLAVTTEAGLIVIALLSGFFGGALIGLPPLCFVALTKDKTKIGTRIGMGFGMVGLGVLAGGPAGGAILSHSHHSNWTGLWVYGGVTSLVAGFIICIAV.

Residues 1 to 13 are compositionally biased toward polar residues; sequence MTEQPPQNHSVDL. Residues 1–57 are disordered; the sequence is MTEQPPQNHSVDLNQNEDNNENDYRSSSATDAERPCEPKIEESTAKPPTGPPAPPPP. An N-linked (GlcNAc...) asparagine glycan is attached at Asn8. Residues 31-44 show a composition bias toward basic and acidic residues; sequence DAERPCEPKIEEST. Residues 48–57 are compositionally biased toward pro residues; that stretch reads PTGPPAPPPP. Helical transmembrane passes span 62-82, 107-127, 134-154, 159-179, 192-212, 223-243, 267-287, 301-323, 330-350, 356-376, and 394-414; these read LVAW…WGIM, WIGS…GSIY, ALLV…SLCK, VLLA…VPCV, TALG…PIVL, WSVR…IAVM, MAFT…LFYI, MAFY…PNAM, FNLI…LLAV, LIVI…LPPL, and MGFG…GAIL. A glycan (N-linked (GlcNAc...) asparagine) is linked at Asn421. A helical membrane pass occupies residues 424–444; sequence GLWVYGGVTSLVAGFIICIAV.

It belongs to the major facilitator superfamily. Monocarboxylate porter (TC 2.A.1.13) family.

The protein localises to the cell membrane. In terms of biological role, MFS-type transporter; part of the gene cluster that mediates the biosynthesis of the antibiotic 2,4- dihydroxy-3-methyl-6-(2-oxopropyl)benzaldehyde (DHMBA) and its derivatives. Is probably involved in the transport of the metabolites to the environment. The protein is MFS-type transporter dbaD of Emericella nidulans (strain FGSC A4 / ATCC 38163 / CBS 112.46 / NRRL 194 / M139) (Aspergillus nidulans).